The primary structure comprises 302 residues: Riboflavin transporter (302 aa).

Helical transmembrane passes span Ala16–Val36, Leu44–Leu64, Val87–Trp107, Ala109–Gly129, Ile158–Ile178, Ile191–Ala213, Gly227–Ala247, and Gly264–Leu284. 2 consecutive EamA domains span residues Phe30–Leu151 and Leu170–Met291.

This sequence belongs to the drug/metabolite transporter (DMT) superfamily. 10 TMS drug/metabolite exporter (DME) (TC 2.A.7.3) family.

The protein resides in the cell membrane. Its function is as follows. Transports riboflavin into the cell. Can also transport FMN and FAD. Required for normal nodule development during colonization of pea plant roots. This is Riboflavin transporter from Rhizobium johnstonii (strain DSM 114642 / LMG 32736 / 3841) (Rhizobium leguminosarum bv. viciae).